The primary structure comprises 502 residues: Maturase K (502 aa).

This sequence belongs to the intron maturase 2 family. MatK subfamily.

The protein localises to the plastid. It is found in the chloroplast. Its function is as follows. Usually encoded in the trnK tRNA gene intron. Probably assists in splicing its own and other chloroplast group II introns. Binds its homologous trnK precursor transcript. This Sinapis alba (White mustard) protein is Maturase K.